A 300-amino-acid polypeptide reads, in one-letter code: MTKQRVCPVCGSTEFIYDPERGEIVCARCGYVIEENIVDMGPEWRAFDASQREKRSRTGAPESILLHDKGLSTDIGIDRSLTGLMREKMYRLRKWQSRLRVSDAAERNLAFALSELDRITAQLKLPKHVEEEAARLYREAVRKGLIRGRSIESVIAACVYAACRLLKVPRTLDEISDIARVEKKEIGRSYRFIARNLNLTPKKLFVKPTDYVNKFADELGLSEKVRRRAIEILEEAYKRGLTSGKSPAGLVAAALYIASLLEGEKRTQREVAEVARVTEVTVRNRYKELVEKLGIKVPVT.

The TFIIB-type zinc-finger motif lies at 3–34 (KQRVCPVCGSTEFIYDPERGEIVCARCGYVIE). Positions 7, 10, 26, and 29 each coordinate Zn(2+). Tandem repeats lie at residues 114 to 197 (SELD…ARNL) and 210 to 291 (DYVN…ELVE).

This sequence belongs to the TFIIB family.

In terms of biological role, stabilizes TBP binding to an archaeal box-A promoter. Also responsible for recruiting RNA polymerase II to the pre-initiation complex (DNA-TBP-TFIIB). This is Transcription initiation factor IIB from Pyrococcus abyssi (strain GE5 / Orsay).